A 318-amino-acid polypeptide reads, in one-letter code: Deoxyhypusine hydroxylase (318 aa).

HEAT-like PBS-type repeat units lie at residues L70–N96 and V103–E129. H72, E73, H105, E106, H231, E232, H264, and E265 together coordinate Fe cation. One copy of the HEAT-like PBS-type 3 repeat lies at V262 to D288.

This sequence belongs to the deoxyhypusine hydroxylase family. Fe(2+) is required as a cofactor.

It is found in the cytoplasm. The protein resides in the nucleus. The catalysed reaction is [eIF5A protein]-deoxyhypusine + AH2 + O2 = [eIF5A protein]-hypusine + A + H2O. It participates in protein modification; eIF5A hypusination. Catalyzes the hydroxylation of the N(6)-(4-aminobutyl)-L-lysine intermediate to form hypusine, an essential post-translational modification only found in mature eIF-5A factor. This Candida albicans (strain SC5314 / ATCC MYA-2876) (Yeast) protein is Deoxyhypusine hydroxylase.